The primary structure comprises 442 residues: CAAX prenyl protease 1 homolog (442 aa).

The Lumenal portion of the chain corresponds to 1–62 (MDASCLFKAL…KARDYKIDNH (62 aa)). The chain crosses the membrane as a helical span at residues 63-83 (LFGFFHSWFNQLLLTAQLIGG). A topological domain (cytoplasmic) is located at residue tyrosine 84. The chain crosses the membrane as a helical span at residues 85-105 (YPFLWYATASYPLHVAVFLSI). At 106–146 (NSIIETIIDLPWDLYSTFIIEDAHGFNKQTIGFYFVDKIKK) the chain is on the lumenal side. A helical membrane pass occupies residues 147-167 (MLVGFALTMPIVYGIEWIIVN). Topologically, residues 168–170 (GGP) are cytoplasmic. The chain crosses the membrane as a helical span at residues 171–191 (YFFVYIWLFVSVVVLLLMTIY). Residues 192–311 (PTFIAPLFDK…ELGHWALWHT (120 aa)) are Lumenal-facing. Position 301 (histidine 301) interacts with Zn(2+). Glutamate 302 is an active-site residue. Residue histidine 305 coordinates Zn(2+). Residues 312 to 332 (LINLVITEVNLFFSFAVFGYF) traverse the membrane as a helical segment. At 333 to 349 (YKWEALYQGFGYHDTPP) the chain is on the cytoplasmic side. A helical membrane pass occupies residues 350–370 (VIGMMLIFQFVLALYNQLASI). The Lumenal segment spans residues 371 to 442 (GMVIHSRSAE…AVRAFQAKNK (72 aa)). Glutamate 380 contacts Zn(2+). The Proton donor role is filled by aspartate 384.

This sequence belongs to the peptidase M48A family. Zn(2+) is required as a cofactor.

Its subcellular location is the endoplasmic reticulum membrane. It localises to the membrane. The catalysed reaction is Hydrolyzes the peptide bond -P2-(S-farnesyl or geranylgeranyl)C-P1'-P2'-P3'-COOH where P1' and P2' are amino acids with aliphatic side chains and P3' is any C-terminal residue.. Functionally, proteolytically removes the C-terminal three residues of farnesylated proteins. The polypeptide is CAAX prenyl protease 1 homolog (Caenorhabditis elegans).